The sequence spans 117 residues: Large ribosomal subunit protein bL20 (117 aa).

Belongs to the bacterial ribosomal protein bL20 family.

In terms of biological role, binds directly to 23S ribosomal RNA and is necessary for the in vitro assembly process of the 50S ribosomal subunit. It is not involved in the protein synthesizing functions of that subunit. The chain is Large ribosomal subunit protein bL20 from Leptospira biflexa serovar Patoc (strain Patoc 1 / Ames).